A 385-amino-acid polypeptide reads, in one-letter code: Tryptophan--tRNA ligase (385 aa).

Positions 82-90 match the 'HIGH' region motif; it reads PSGPMHIGH. The 'KMSKS' region motif lies at 253-257; the sequence is KMSAS.

It belongs to the class-I aminoacyl-tRNA synthetase family.

Its subcellular location is the cytoplasm. It catalyses the reaction tRNA(Trp) + L-tryptophan + ATP = L-tryptophyl-tRNA(Trp) + AMP + diphosphate + H(+). The chain is Tryptophan--tRNA ligase from Pyrococcus abyssi (strain GE5 / Orsay).